The primary structure comprises 473 residues: Calcium/calmodulin-dependent protein kinase type IV (473 aa).

Phosphoserine; by autocatalysis is present on residues serine 12 and serine 13. A Protein kinase domain is found at 46–300; it reads FEVESELGRG…TFQALQHPWV (255 aa). Residues 52–60 and lysine 75 contribute to the ATP site; that span reads LGRGATSIV. Threonine 57 carries O-linked (GlcNAc) threonine glycosylation. Serine 58 is a glycosylation site (O-linked (GlcNAc) serine). O-linked (GlcNAc) serine glycosylation occurs at serine 137. Aspartate 164 serves as the catalytic Proton acceptor. O-linked (GlcNAc) serine glycosylation occurs at serine 189. A Phosphothreonine; by CaMKK1 and CaMKK2 modification is found at threonine 200. The interval 305–321 is autoinhibitory domain; that stretch reads ANFVHMDTAQKKLQEFN. The segment at 306–323 is PP2A-binding; sequence NFVHMDTAQKKLQEFNAR. The tract at residues 322–341 is calmodulin-binding; the sequence is ARRKLKAAVKAVVASSRLGS. Serine 336 bears the Phosphoserine; by autocatalysis mark. The residue at position 341 (serine 341) is a Phosphoserine. The segment covering 341–350 has biased composition (low complexity); it reads SASSSHGSIQ. Disordered stretches follow at residues 341–368 and 445–473; these read SASS…GNED and EEAA…LPEY. Serine 344, serine 345, and serine 356 each carry an O-linked (GlcNAc) serine glycan. Position 360 is a phosphoserine (serine 360).

This sequence belongs to the protein kinase superfamily. CAMK Ser/Thr protein kinase family. CaMK subfamily. Monomer. Interacts with protein phosphatase 2A (PPP2CA/PPP2CB); the interaction is mutually exclusive with binding to Ca(2+)/calmodulin. In terms of processing, phosphorylated by CaMKK1 and CaMKK2 on Thr-200. Dephosphorylated by protein phosphatase 2A. Autophosphorylated on Ser-12 and Ser-13. Post-translationally, glycosylation at Ser-189 modulates the phosphorylation of CaMK4 at Thr-200 and negatively regulates its activity toward CREB1 in basal conditions and during early inomycin stimulation. In terms of tissue distribution, expressed in brain, thymus, CD4 T-cells, testis and epithelial ovarian cancer tissue.

The protein localises to the cytoplasm. Its subcellular location is the nucleus. The catalysed reaction is L-seryl-[protein] + ATP = O-phospho-L-seryl-[protein] + ADP + H(+). It carries out the reaction L-threonyl-[protein] + ATP = O-phospho-L-threonyl-[protein] + ADP + H(+). With respect to regulation, activated by Ca(2+)/calmodulin. Binding of calmodulin results in conformational change that relieves intrasteric autoinhibition and allows phosphorylation of Thr-200 within the activation loop by CaMKK1 or CaMKK2. Phosphorylation of Thr-200 results in a 10-20-fold increase in total activity to generate Ca(2+)/calmodulin-independent activity. Autophosphorylation of the N-terminus Ser-12 and Ser-13 is required for full activation. Inactivated by protein phosphatase 2A (PPP2CA/PPP2CB) which dephosphorylates Thr-200, thereby terminating autonomous activity and helping to maintain the enzyme in its autoinhibited state. Functionally, calcium/calmodulin-dependent protein kinase that operates in the calcium-triggered CaMKK-CaMK4 signaling cascade and regulates, mainly by phosphorylation, the activity of several transcription activators, such as CREB1, MEF2D, JUN and RORA, which play pivotal roles in immune response, inflammation, and memory consolidation. In the thymus, regulates the CD4(+)/CD8(+) double positive thymocytes selection threshold during T-cell ontogeny. In CD4 memory T-cells, is required to link T-cell antigen receptor (TCR) signaling to the production of IL2, IFNG and IL4 (through the regulation of CREB and MEF2). Regulates the differentiation and survival phases of osteoclasts and dendritic cells (DCs). Mediates DCs survival by linking TLR4 and the regulation of temporal expression of BCL2. Phosphorylates the transcription activator CREB1 on 'Ser-133' in hippocampal neuron nuclei and contribute to memory consolidation and long term potentiation (LTP) in the hippocampus. Can activate the MAP kinases MAPK1/ERK2, MAPK8/JNK1 and MAPK14/p38 and stimulate transcription through the phosphorylation of ELK1 and ATF2. Can also phosphorylate in vitro CREBBP, PRM2, MEF2A and STMN1/OP18. The polypeptide is Calcium/calmodulin-dependent protein kinase type IV (CAMK4) (Homo sapiens (Human)).